We begin with the raw amino-acid sequence, 149 residues long: UPF0178 protein VC0395_A0405/VC395_0897 (149 aa).

The protein belongs to the UPF0178 family.

In Vibrio cholerae serotype O1 (strain ATCC 39541 / Classical Ogawa 395 / O395), this protein is UPF0178 protein VC0395_A0405/VC395_0897.